The sequence spans 689 residues: Glycine--tRNA ligase beta subunit (689 aa).

Belongs to the class-II aminoacyl-tRNA synthetase family. Tetramer of two alpha and two beta subunits.

It is found in the cytoplasm. The enzyme catalyses tRNA(Gly) + glycine + ATP = glycyl-tRNA(Gly) + AMP + diphosphate. In Salmonella schwarzengrund (strain CVM19633), this protein is Glycine--tRNA ligase beta subunit.